A 703-amino-acid chain; its full sequence is Elongation factor G 1 (703 aa).

The tr-type G domain maps to 8-291 (ERYRNIGISA…AVIDYLPSPV (284 aa)). GTP contacts are provided by residues 17–24 (AHIDAGKT), 88–92 (DTPGH), and 142–145 (NKMD).

Belongs to the TRAFAC class translation factor GTPase superfamily. Classic translation factor GTPase family. EF-G/EF-2 subfamily.

Its subcellular location is the cytoplasm. In terms of biological role, catalyzes the GTP-dependent ribosomal translocation step during translation elongation. During this step, the ribosome changes from the pre-translocational (PRE) to the post-translocational (POST) state as the newly formed A-site-bound peptidyl-tRNA and P-site-bound deacylated tRNA move to the P and E sites, respectively. Catalyzes the coordinated movement of the two tRNA molecules, the mRNA and conformational changes in the ribosome. This chain is Elongation factor G 1, found in Burkholderia orbicola (strain AU 1054).